The chain runs to 367 residues: Cyclin-Y-like protein 1 (367 aa).

Phosphoserine occurs at positions 73, 111, and 118. In terms of domain architecture, Cyclin N-terminal spans Glu186–Asn291. Phosphoserine is present on Ser352.

The protein belongs to the cyclin family. Cyclin Y subfamily. Interacts with CDK16; this interaction mutually increases the stability of CDK16 and CCNYL1 and increases the kinase activity of CDK16. Highly expressed in the testis. Largely restricted to germ cells in the testis.

It localises to the cell membrane. Its function is as follows. Key regulator of Wnt signaling implicated in various biological processes including male fertility, embryonic neurogenesis and cortex development. Activates the cyclin-dependent kinase CDK16, and promotes sperm maturation. The protein is Cyclin-Y-like protein 1 of Mus musculus (Mouse).